A 126-amino-acid polypeptide reads, in one-letter code: Protein LLP homolog (126 aa).

Residues 1 to 21 are compositionally biased toward basic residues; that stretch reads MAKSLRSKWRRKMRAEKRKKV. Disordered stretches follow at residues 1 to 22 and 53 to 126; these read MAKS…KKVA and VPPE…RLAW. Residues 73-94 are compositionally biased toward basic and acidic residues; it reads DGGKMDLDTKRNKKTMLDEHGR. Positions 103–126 are enriched in basic residues; the sequence is QAKKLKAKRVGKNGKPKPKKRLAW.

This sequence belongs to the learning-associated protein family.

Its subcellular location is the nucleus. It is found in the nucleolus. The protein localises to the chromosome. Functionally, regulates dendritic and spine growth and synaptic transmission. This is Protein LLP homolog (llph) from Danio rerio (Zebrafish).